The chain runs to 419 residues: Pregnancy-specific beta-1-glycoprotein 1 (419 aa).

The N-terminal stretch at 1–34 (MGTLSAPPCTQRIKWKGLLLTASLLNFWNLPTTA) is a signal peptide. The Ig-like V-type domain maps to 35–144 (QVTIEAEPTK…TGRFTFTLHL (110 aa)). Asn61, Asn104, Asn111, Asn199, Asn259, Asn268, and Asn303 each carry an N-linked (GlcNAc...) asparagine glycan. 3 Ig-like C2-type domains span residues 149-234 (PSIS…VTLN), 240-327 (PKPY…VTLN), and 335-410 (PRIY…KSMT). An intrachain disulfide couples Cys169 to Cys217. 2 cysteine pairs are disulfide-bonded: Cys262–Cys310 and Cys354–Cys394.

Belongs to the immunoglobulin superfamily. CEA family.

Its subcellular location is the secreted. The chain is Pregnancy-specific beta-1-glycoprotein 1 (PSG1) from Homo sapiens (Human).